A 43-amino-acid chain; its full sequence is Protein PsbN (43 aa).

The helical transmembrane segment at 7–29 (ITIFLSGLLVSFTGYALYTAFGQ) threads the bilayer.

This sequence belongs to the PsbN family.

The protein localises to the plastid membrane. Its function is as follows. May play a role in photosystem I and II biogenesis. This is Protein PsbN from Cuscuta reflexa (Southern Asian dodder).